A 196-amino-acid chain; its full sequence is Ribosome maturation factor RimP (196 aa).

Residues 164 to 196 (LAPQKPNKPGPKKTGHEKKKPSNESAAGKPRAE) form a disordered region. A compositionally biased stretch (basic residues) spans 173 to 182 (GPKKTGHEKK).

This sequence belongs to the RimP family.

It localises to the cytoplasm. Functionally, required for maturation of 30S ribosomal subunits. The protein is Ribosome maturation factor RimP of Xanthomonas oryzae pv. oryzae (strain MAFF 311018).